We begin with the raw amino-acid sequence, 439 residues long: S-layer protein (439 aa).

The first 30 residues, 1–30, serve as a signal peptide directing secretion; sequence MKKNLRIVSAAAAALLAVAPIAATAMPVNA.

Glycosylated.

Its subcellular location is the secreted. It is found in the cell wall. It localises to the S-layer. The S-layer is a paracrystalline mono-layered assembly of proteins which coat the surface of bacteria. The polypeptide is S-layer protein (slpH) (Lactobacillus helveticus (Lactobacillus suntoryeus)).